The chain runs to 206 residues: FMN-dependent NADH:quinone oxidoreductase 2 (206 aa).

Residue serine 10 coordinates FMN.

This sequence belongs to the azoreductase type 1 family. As to quaternary structure, homodimer. FMN is required as a cofactor.

It catalyses the reaction 2 a quinone + NADH + H(+) = 2 a 1,4-benzosemiquinone + NAD(+). The catalysed reaction is N,N-dimethyl-1,4-phenylenediamine + anthranilate + 2 NAD(+) = 2-(4-dimethylaminophenyl)diazenylbenzoate + 2 NADH + 2 H(+). In terms of biological role, quinone reductase that provides resistance to thiol-specific stress caused by electrophilic quinones. Also exhibits azoreductase activity. Catalyzes the reductive cleavage of the azo bond in aromatic azo compounds to the corresponding amines. This chain is FMN-dependent NADH:quinone oxidoreductase 2, found in Rhizobium etli (strain ATCC 51251 / DSM 11541 / JCM 21823 / NBRC 15573 / CFN 42).